A 542-amino-acid polypeptide reads, in one-letter code: Putative CTP synthase (542 aa).

The interval 1–277 (MEIDLMKHIQ…HKTILDFFSL (277 aa)) is amidoligase domain. Residue Ser23 participates in CTP binding. UTP is bound at residue Ser23. Residues 24 to 29 (SLGKGV) and Asp81 contribute to the ATP site. Mg(2+) is bound by residues Asp81 and Glu151. Residues 158–160 (DIE), 198–203 (KTKPTQ), and Lys234 contribute to the CTP site. Residues 198–203 (KTKPTQ) and Lys234 each bind UTP. Positions 310 to 542 (YVELPDAYKS…LKMSLKIKES (233 aa)) constitute a Glutamine amidotransferase type-1 domain. Glu517 is an active-site residue.

It belongs to the CTP synthase family. Homotetramer.

It catalyses the reaction UTP + L-glutamine + ATP + H2O = CTP + L-glutamate + ADP + phosphate + 2 H(+). It carries out the reaction L-glutamine + H2O = L-glutamate + NH4(+). The enzyme catalyses UTP + NH4(+) + ATP = CTP + ADP + phosphate + 2 H(+). It participates in pyrimidine metabolism; CTP biosynthesis via de novo pathway; CTP from UDP: step 2/2. With respect to regulation, allosterically activated by GTP, when glutamine is the substrate; GTP has no effect on the reaction when ammonia is the substrate. The allosteric effector GTP functions by stabilizing the protein conformation that binds the tetrahedral intermediate(s) formed during glutamine hydrolysis. Inhibited by the product CTP, via allosteric rather than competitive inhibition. Catalyzes the ATP-dependent amination of UTP to CTP with either L-glutamine or ammonia as the source of nitrogen. Regulates intracellular CTP levels through interactions with the four ribonucleotide triphosphates. The polypeptide is Putative CTP synthase (Ureaplasma parvum serovar 3 (strain ATCC 700970)).